Consider the following 156-residue polypeptide: MAKTFKFIFYFWGAFVLVFALDQWVKSLTLAGLRWQSEYLDLTYALNTGVAFSMLSFLEHNLKYLHLALIVVLFIYLFWQKTLLKTHSIAFGMMLGAGVSNLLDRFIHGGVVDMFFWHKWFNFAIFNVADVMINISVALILIQEIFKKRKKDDRMD.

3 helical membrane passes run 5-25, 64-84, and 89-109; these read FKFI…DQWV, YLHL…KTLL, and IAFG…FIHG. Residues aspartate 113 and aspartate 130 contribute to the active site. A helical membrane pass occupies residues 122 to 142; sequence NFAIFNVADVMINISVALILI.

This sequence belongs to the peptidase A8 family.

It localises to the cell inner membrane. It catalyses the reaction Release of signal peptides from bacterial membrane prolipoproteins. Hydrolyzes -Xaa-Yaa-Zaa-|-(S,diacylglyceryl)Cys-, in which Xaa is hydrophobic (preferably Leu), and Yaa (Ala or Ser) and Zaa (Gly or Ala) have small, neutral side chains.. It functions in the pathway protein modification; lipoprotein biosynthesis (signal peptide cleavage). In terms of biological role, this protein specifically catalyzes the removal of signal peptides from prolipoproteins. In Campylobacter jejuni subsp. jejuni serotype O:23/36 (strain 81-176), this protein is Lipoprotein signal peptidase.